Here is a 276-residue protein sequence, read N- to C-terminus: Diaminopimelate epimerase (276 aa).

Residues Asn13, Gln46, and Asn66 each contribute to the substrate site. Catalysis depends on Cys75, which acts as the Proton donor. Substrate is bound by residues 76 to 77, Asn159, Asn192, and 210 to 211; these read GN and ER. Cys219 serves as the catalytic Proton acceptor. 220–221 provides a ligand contact to substrate; that stretch reads GT.

This sequence belongs to the diaminopimelate epimerase family. In terms of assembly, homodimer.

It is found in the cytoplasm. The enzyme catalyses (2S,6S)-2,6-diaminopimelate = meso-2,6-diaminopimelate. It participates in amino-acid biosynthesis; L-lysine biosynthesis via DAP pathway; DL-2,6-diaminopimelate from LL-2,6-diaminopimelate: step 1/1. In terms of biological role, catalyzes the stereoinversion of LL-2,6-diaminopimelate (L,L-DAP) to meso-diaminopimelate (meso-DAP), a precursor of L-lysine and an essential component of the bacterial peptidoglycan. The chain is Diaminopimelate epimerase from Chromobacterium violaceum (strain ATCC 12472 / DSM 30191 / JCM 1249 / CCUG 213 / NBRC 12614 / NCIMB 9131 / NCTC 9757 / MK).